A 176-amino-acid chain; its full sequence is NAD(P)H-quinone oxidoreductase subunit 6, chloroplastic (176 aa).

Transmembrane regions (helical) follow at residues 10-30 (FLLV…VLLP), 32-52 (PIFS…LYIL), 61-81 (AQLL…VMFM), 92-112 (LWTV…FSLM), and 152-172 (FFLP…GAIS).

Belongs to the complex I subunit 6 family. NDH is composed of at least 16 different subunits, 5 of which are encoded in the nucleus.

It is found in the plastid. Its subcellular location is the chloroplast thylakoid membrane. It carries out the reaction a plastoquinone + NADH + (n+1) H(+)(in) = a plastoquinol + NAD(+) + n H(+)(out). The catalysed reaction is a plastoquinone + NADPH + (n+1) H(+)(in) = a plastoquinol + NADP(+) + n H(+)(out). NDH shuttles electrons from NAD(P)H:plastoquinone, via FMN and iron-sulfur (Fe-S) centers, to quinones in the photosynthetic chain and possibly in a chloroplast respiratory chain. The immediate electron acceptor for the enzyme in this species is believed to be plastoquinone. Couples the redox reaction to proton translocation, and thus conserves the redox energy in a proton gradient. The chain is NAD(P)H-quinone oxidoreductase subunit 6, chloroplastic (ndhG) from Nasturtium officinale (Watercress).